Here is a 55-residue protein sequence, read N- to C-terminus: Large ribosomal subunit protein bL32 (55 aa).

The segment covering 1–19 (MAVPKRRMSRANTHSRRSQ) has biased composition (basic residues). The tract at residues 1–20 (MAVPKRRMSRANTHSRRSQW) is disordered.

Belongs to the bacterial ribosomal protein bL32 family.

This is Large ribosomal subunit protein bL32 from Corynebacterium jeikeium (strain K411).